A 331-amino-acid chain; its full sequence is Adenosine deaminase (331 aa).

Residues His-12 and His-14 each coordinate Zn(2+). Substrate is bound by residues His-14, Asp-16, and Gly-170. His-197 provides a ligand contact to Zn(2+). The active-site Proton donor is Glu-200. Asp-278 is a Zn(2+) binding site. Asp-279 provides a ligand contact to substrate.

This sequence belongs to the metallo-dependent hydrolases superfamily. Adenosine and AMP deaminases family. Adenosine deaminase subfamily. Zn(2+) is required as a cofactor.

The enzyme catalyses adenosine + H2O + H(+) = inosine + NH4(+). It carries out the reaction 2'-deoxyadenosine + H2O + H(+) = 2'-deoxyinosine + NH4(+). Functionally, catalyzes the hydrolytic deamination of adenosine and 2-deoxyadenosine. The protein is Adenosine deaminase of Shewanella sp. (strain MR-4).